A 505-amino-acid polypeptide reads, in one-letter code: 2,3-bisphosphoglycerate-independent phosphoglycerate mutase (505 aa).

Residues Asp-12 and Ser-62 each coordinate Mn(2+). Ser-62 acts as the Phosphoserine intermediate in catalysis. Residues His-123, 153 to 154 (RD), Arg-185, Arg-191, 257 to 260 (RPDR), and Lys-330 each bind substrate. 5 residues coordinate Mn(2+): Asp-397, His-401, Asp-438, His-439, and His-456.

It belongs to the BPG-independent phosphoglycerate mutase family. In terms of assembly, monomer. Requires Mn(2+) as cofactor.

The enzyme catalyses (2R)-2-phosphoglycerate = (2R)-3-phosphoglycerate. The protein operates within carbohydrate degradation; glycolysis; pyruvate from D-glyceraldehyde 3-phosphate: step 3/5. In terms of biological role, catalyzes the interconversion of 2-phosphoglycerate and 3-phosphoglycerate. In Staphylococcus aureus (strain Mu50 / ATCC 700699), this protein is 2,3-bisphosphoglycerate-independent phosphoglycerate mutase.